A 309-amino-acid polypeptide reads, in one-letter code: Homoserine kinase (309 aa).

91-101 serves as a coordination point for ATP; sequence PIGSGLGSSAC.

Belongs to the GHMP kinase family. Homoserine kinase subfamily.

The protein localises to the cytoplasm. The enzyme catalyses L-homoserine + ATP = O-phospho-L-homoserine + ADP + H(+). It functions in the pathway amino-acid biosynthesis; L-threonine biosynthesis; L-threonine from L-aspartate: step 4/5. Functionally, catalyzes the ATP-dependent phosphorylation of L-homoserine to L-homoserine phosphate. In Salmonella paratyphi B (strain ATCC BAA-1250 / SPB7), this protein is Homoserine kinase.